We begin with the raw amino-acid sequence, 262 residues long: Transcription factor Adf-1 (262 aa).

Residues 24–104 (NLIEAVKLNP…QMQFLVDSIR (81 aa)) constitute a DNA-binding region (MADF). In terms of domain architecture, BESS spans 217 to 256 (SAEDQSFGMVVTDMLNTLGVRQKAEAKVHIIKYLTDMQLL).

In terms of processing, O-glycosylated; contains N-acetylglucosamine side chains.

Its subcellular location is the nucleus. Functionally, may play an important role not only in the regulation of Adh expression but also in the transcription of other genes. The protein is Transcription factor Adf-1 (Adf1) of Drosophila melanogaster (Fruit fly).